The following is a 94-amino-acid chain: Small ribosomal subunit protein uS19 (94 aa).

Belongs to the universal ribosomal protein uS19 family.

Protein S19 forms a complex with S13 that binds strongly to the 16S ribosomal RNA. The protein is Small ribosomal subunit protein uS19 of Natranaerobius thermophilus (strain ATCC BAA-1301 / DSM 18059 / JW/NM-WN-LF).